The sequence spans 806 residues: Leucine--tRNA ligase (806 aa).

The short motif at Ser54–His64 is the 'HIGH' region element. Positions Lys571–Ser575 match the 'KMSKS' region motif. Position 574 (Lys574) interacts with ATP.

Belongs to the class-I aminoacyl-tRNA synthetase family.

It is found in the cytoplasm. It catalyses the reaction tRNA(Leu) + L-leucine + ATP = L-leucyl-tRNA(Leu) + AMP + diphosphate. The polypeptide is Leucine--tRNA ligase (Tropheryma whipplei (strain TW08/27) (Whipple's bacillus)).